The primary structure comprises 402 residues: Propionate kinase (402 aa).

The ATP site is built by Asn11 and Lys18. Asn11 contributes to the Mg(2+) binding site. Arg86 contacts substrate. Asp143 (proton donor/acceptor) is an active-site residue. ATP-binding positions include His175, 203-207 (HLGNG), 278-280 (DLR), and 326-330 (GIGEN).

Belongs to the acetokinase family. TdcD subfamily. As to quaternary structure, homodimer. Requires Mg(2+) as cofactor.

It carries out the reaction propanoate + ATP = propanoyl phosphate + ADP. Its pathway is amino-acid degradation; L-threonine degradation via propanoate pathway; propanoate from L-threonine: step 4/4. Its function is as follows. Catalyzes the conversion of propionyl phosphate and ADP to propionate and ATP. The chain is Propionate kinase from Escherichia coli O157:H7.